The sequence spans 296 residues: Protoheme IX farnesyltransferase (296 aa).

The Cytoplasmic portion of the chain corresponds to 1–9; sequence MMFKQYLQV. Residues 10 to 28 traverse the membrane as a helical segment; sequence TKPGIIFGNLISVIGGFLL. The Periplasmic segment spans residues 29-37; it reads ASKGSIDYP. Residues 38-56 form a helical membrane-spanning segment; that stretch reads LFIYTLVGVSLVVASGCVF. Over 57 to 78 the chain is Cytoplasmic; that stretch reads NNYIDRDIDRKMERTKNRVLVK. Residues 79 to 97 form a helical membrane-spanning segment; that stretch reads GLISPAVSLVYATLLGIAG. The Periplasmic portion of the chain corresponds to 98-107; the sequence is FMLLWFGANP. Residues 108–126 traverse the membrane as a helical segment; sequence LACWLGVMGFVVYVGVYSL. Over 127-197 the chain is Cytoplasmic; that stretch reads YMKRHSVYGT…YQAANIPVLP (71 aa). A helical membrane pass occupies residues 198 to 216; sequence VVKGISVAKNHITLYIIAF. Residues 217-228 are Periplasmic-facing; it reads AVATLMLSLGGY. A helical membrane pass occupies residues 229–247; that stretch reads AGYKYLVVAAAVSVWWLGM. Over 248 to 268 the chain is Cytoplasmic; it reads ALRGYKVADDRIWARKLFGFS. A helical membrane pass occupies residues 269–287; it reads IIAITALSVMMSVDFMVPD. Topologically, residues 288–296 are periplasmic; that stretch reads SHTLLAAVW.

This sequence belongs to the UbiA prenyltransferase family. Protoheme IX farnesyltransferase subfamily.

The protein resides in the cell inner membrane. The catalysed reaction is heme b + (2E,6E)-farnesyl diphosphate + H2O = Fe(II)-heme o + diphosphate. It functions in the pathway porphyrin-containing compound metabolism; heme O biosynthesis; heme O from protoheme: step 1/1. In terms of biological role, converts heme B (protoheme IX) to heme O by substitution of the vinyl group on carbon 2 of heme B porphyrin ring with a hydroxyethyl farnesyl side group. The protein is Protoheme IX farnesyltransferase of Shigella flexneri.